The chain runs to 957 residues: Glycine dehydrogenase (decarboxylating) (957 aa).

Lysine 708 is subject to N6-(pyridoxal phosphate)lysine.

This sequence belongs to the GcvP family. As to quaternary structure, the glycine cleavage system is composed of four proteins: P, T, L and H. Pyridoxal 5'-phosphate is required as a cofactor.

It carries out the reaction N(6)-[(R)-lipoyl]-L-lysyl-[glycine-cleavage complex H protein] + glycine + H(+) = N(6)-[(R)-S(8)-aminomethyldihydrolipoyl]-L-lysyl-[glycine-cleavage complex H protein] + CO2. Functionally, the glycine cleavage system catalyzes the degradation of glycine. The P protein binds the alpha-amino group of glycine through its pyridoxal phosphate cofactor; CO(2) is released and the remaining methylamine moiety is then transferred to the lipoamide cofactor of the H protein. The protein is Glycine dehydrogenase (decarboxylating) of Escherichia coli O7:K1 (strain IAI39 / ExPEC).